We begin with the raw amino-acid sequence, 207 residues long: Heat shock protein beta-1 (207 aa).

An Omega-N-methylarginine modification is found at Arg-12. Ser-13 carries the phosphoserine modification. A Phosphoserine; by MAPKAPK2 and MAPKAPK3 modification is found at Ser-15. Position 27 is a phosphoserine (Ser-27). Residues 72–207 (APAYSRLLSR…AGKSEKPGTK (136 aa)) form an interaction with TGFB1I1 region. The region spanning 78–186 (LLSRQLSSGV…QSAEITIPVT (109 aa)) is the sHSP domain. Residues Ser-80 and Ser-84 each carry the phosphoserine; by MAPKAPK2, MAPKAPK3 and MAPKAPK5 modification. Residues Ser-85, Ser-88, and Ser-100 each carry the phosphoserine modification. Lys-125 is subject to N6-acetyllysine. The disordered stretch occupies residues 151–181 (DPTQVSSSLSPEGTLSVEAPLPKPATQSAEI). Residues 153–163 (TQVSSSLSPEG) are compositionally biased toward polar residues. Position 176 is a phosphothreonine (Thr-176). Residues Ser-178 and Ser-201 each carry the phosphoserine modification.

It belongs to the small heat shock protein (HSP20) family. Homooligomer. Homodimer; becomes monomeric upon activation. Heterooligomer; with HSPB6. Associates with alpha- and beta-tubulin. Interacts with TGFB1I1. Interacts with CRYAB. Interacts with HSPB8. Interacts with HSPBAP1. In terms of processing, phosphorylated upon exposure to protein kinase C activators and heat shock. Phosphorylation by MAPKAPK2 and MAPKAPK3 in response to stress dissociates HSPB1 from large small heat-shock protein (sHsps) oligomers and impairs its chaperone activity and ability to protect against oxidative stress effectively. Phosphorylation by MAPKAPK5 in response to PKA stimulation induces F-actin rearrangement.

It is found in the cytoplasm. The protein resides in the nucleus. The protein localises to the cytoskeleton. Its subcellular location is the spindle. Functionally, small heat shock protein which functions as a molecular chaperone probably maintaining denatured proteins in a folding-competent state. Plays a role in stress resistance and actin organization. Through its molecular chaperone activity may regulate numerous biological processes including the phosphorylation and the axonal transport of neurofilament proteins. This is Heat shock protein beta-1 (HSPB1) from Sus scrofa (Pig).